We begin with the raw amino-acid sequence, 548 residues long: Organic cation transporter protein (548 aa).

The Cytoplasmic segment spans residues 1–22; sequence MGYDDVITHLGEFGPYQKRIYY. Residues 23-43 form a helical membrane-spanning segment; it reads LLCLPAIVCAFHKLAGVFLLA. Residues 44–127 lie on the Extracellular side of the membrane; sequence KPDFRCALPY…TEWNLVCSRS (84 aa). Residues Asn55, Asn67, Asn89, and Asn97 are each glycosylated (N-linked (GlcNAc...) asparagine). A helical membrane pass occupies residues 128-148; sequence LLSATSDSLFMLGVLLGSLIF. Residues 149–158 lie on the Cytoplasmic side of the membrane; the sequence is GQMSDKLGRK. A helical membrane pass occupies residues 159–179; the sequence is PTFFASLVLQLIFGVLAAVAP. At 180–189 the chain is on the extracellular side; it reads EYFSYTISRM. A helical transmembrane segment spans residues 190-210; it reads IVGATTSGVFLVAYVIALEMV. Over 211–219 the chain is Cytoplasmic; it reads GSSYRLFAG. Residues 220-240 traverse the membrane as a helical segment; sequence VAMQMFFSVGFMLTAGFAYFI. The Extracellular portion of the chain corresponds to 241–244; the sequence is HDWR. A helical membrane pass occupies residues 245–265; sequence WLQIAITLPGLLFLCYYWIIP. Residues 266–337 are Cytoplasmic-facing; the sequence is ESARWLLMKG…LLRYPNLRRK (72 aa). The chain crosses the membrane as a helical span at residues 338–358; the sequence is TLLIFFDWFVNSGVYYGLSWN. Topologically, residues 359 to 366 are extracellular; the sequence is TNNLGGNQ. Residues 367–387 form a helical membrane-spanning segment; the sequence is LVNFMISGAVEIPGYTLLLFT. At 388–395 the chain is on the cytoplasmic side; sequence LNRWGRRS. Residues 396–416 form a helical membrane-spanning segment; it reads ILCGTMMVAGISLLATIFVPS. Residues 417–419 are Extracellular-facing; it reads DMN. Residues 420–440 traverse the membrane as a helical segment; sequence WLIVACAMIGKLAITSSYGTI. Residues 441-453 lie on the Cytoplasmic side of the membrane; that stretch reads YIFSAEQFPTVVR. Residues 454–474 traverse the membrane as a helical segment; it reads NVGLGASSMVARVGGILAPYL. Residues 475–482 lie on the Extracellular side of the membrane; sequence KLLGEIWR. The chain crosses the membrane as a helical span at residues 483–503; that stretch reads PLPLIICGALSLTAGLLSLLL. Residues 504 to 548 lie on the Cytoplasmic side of the membrane; that stretch reads PETLNKPMPETIEDGENFGKKPAPQETAEEGGTQELSGMLNGKSG. Residues 512 to 548 are disordered; sequence PETIEDGENFGKKPAPQETAEEGGTQELSGMLNGKSG.

The protein belongs to the major facilitator (TC 2.A.1) superfamily. Organic cation transporter (TC 2.A.1.19) family. As to expression, expressed in embryos and adults at low level. Expressed at higher level in third instar larvae.

It is found in the membrane. Its function is as follows. Probably transports organic cations. The chain is Organic cation transporter protein (Orct) from Drosophila melanogaster (Fruit fly).